Here is an 829-residue protein sequence, read N- to C-terminus: Leucine--tRNA ligase (829 aa).

Positions 40–50 match the 'HIGH' region motif; sequence PYPSGNIHMGH. Residues 581–585 carry the 'KMSKS' region motif; that stretch reads KMSKS. Residue Lys-584 coordinates ATP.

It belongs to the class-I aminoacyl-tRNA synthetase family.

It localises to the cytoplasm. It catalyses the reaction tRNA(Leu) + L-leucine + ATP = L-leucyl-tRNA(Leu) + AMP + diphosphate. The polypeptide is Leucine--tRNA ligase (Nitratidesulfovibrio vulgaris (strain ATCC 29579 / DSM 644 / CCUG 34227 / NCIMB 8303 / VKM B-1760 / Hildenborough) (Desulfovibrio vulgaris)).